The following is a 670-amino-acid chain: UvrABC system protein B (670 aa).

Positions 51–433 (EGLKKREQFQ…SARIVEQIIR (383 aa)) constitute a Helicase ATP-binding domain. Residue 64 to 71 (GVTGSGKT) participates in ATP binding. The Beta-hairpin motif lies at 117–140 (YYDYYQPESYLPAKDQYIEKDAQI). A Helicase C-terminal domain is found at 453–612 (DVMQEIRKIV…IVPKTIRKPI (160 aa)). Positions 631–666 (PNVIIELDAEMREAADRLDFERAIQLRELIKKLEKE) constitute a UVR domain.

It belongs to the UvrB family. In terms of assembly, forms a heterotetramer with UvrA during the search for lesions. Interacts with UvrC in an incision complex.

It localises to the cytoplasm. The UvrABC repair system catalyzes the recognition and processing of DNA lesions. A damage recognition complex composed of 2 UvrA and 2 UvrB subunits scans DNA for abnormalities. Upon binding of the UvrA(2)B(2) complex to a putative damaged site, the DNA wraps around one UvrB monomer. DNA wrap is dependent on ATP binding by UvrB and probably causes local melting of the DNA helix, facilitating insertion of UvrB beta-hairpin between the DNA strands. Then UvrB probes one DNA strand for the presence of a lesion. If a lesion is found the UvrA subunits dissociate and the UvrB-DNA preincision complex is formed. This complex is subsequently bound by UvrC and the second UvrB is released. If no lesion is found, the DNA wraps around the other UvrB subunit that will check the other stand for damage. In Methanosarcina acetivorans (strain ATCC 35395 / DSM 2834 / JCM 12185 / C2A), this protein is UvrABC system protein B.